We begin with the raw amino-acid sequence, 359 residues long: Protein Wnt-5b (359 aa).

Positions Met-1–Ala-17 are cleaved as a signal peptide. The cysteines at positions 83 and 94 are disulfide-linked. N-linked (GlcNAc...) asparagine glycans are attached at residues Asn-93 and Asn-99. Cystine bridges form between Cys-133-Cys-141, Cys-143-Cys-161, Cys-217-Cys-231, Cys-219-Cys-226, Cys-288-Cys-319, Cys-304-Cys-314, Cys-318-Cys-358, Cys-334-Cys-349, Cys-336-Cys-346, and Cys-341-Cys-342. A lipid anchor (O-palmitoleoyl serine; by PORCN) is attached at Ser-223. Asn-291 and Asn-305 each carry an N-linked (GlcNAc...) asparagine glycan.

Belongs to the Wnt family. Interacts with PORCN. In terms of processing, palmitoleoylation is required for efficient binding to frizzled receptors. Depalmitoleoylation leads to Wnt signaling pathway inhibition.

The protein localises to the secreted. Its subcellular location is the extracellular space. It is found in the extracellular matrix. Ligand for members of the frizzled family of seven transmembrane receptors. Probable developmental protein. May be a signaling molecule which affects the development of discrete regions of tissues. Is likely to signal over only few cell diameters. The chain is Protein Wnt-5b (Wnt5b) from Mus musculus (Mouse).